The primary structure comprises 248 residues: tRNA (guanine-N(1)-)-methyltransferase (248 aa).

Residues glycine 113 and 133-138 (IGDFVL) contribute to the S-adenosyl-L-methionine site.

The protein belongs to the RNA methyltransferase TrmD family. Homodimer.

It is found in the cytoplasm. It catalyses the reaction guanosine(37) in tRNA + S-adenosyl-L-methionine = N(1)-methylguanosine(37) in tRNA + S-adenosyl-L-homocysteine + H(+). Specifically methylates guanosine-37 in various tRNAs. This Dehalococcoides mccartyi (strain ATCC BAA-2100 / JCM 16839 / KCTC 5957 / BAV1) protein is tRNA (guanine-N(1)-)-methyltransferase.